We begin with the raw amino-acid sequence, 782 residues long: Gelsolin (782 aa).

An N-terminal signal peptide occupies residues 1-27; the sequence is MAPHRPAPALLCALSLALCALSLPVRA. The segment at 53–176 is actin-severing; it reads VVEHPEFLKA…YKKGGVASGF (124 aa). The stretch at 76–158 is one Gelsolin-like 1 repeat; it reads FDLVPVPTNL…VQGFESATFL (83 aa). Residue tyrosine 86 is modified to Phosphotyrosine; by SRC; in vitro. Ca(2+) is bound by residues glycine 92, aspartate 93, glutamate 124, aspartate 136, glycine 141, and alanine 143. The interval 123–126 is actin-actin interfilament contact point; sequence DESG. A 1,2-diacyl-sn-glycero-3-phospho-(1D-myo-inositol-4,5-bisphosphate) is bound at residue 162–169; that stretch reads KSGLKYKK. Position 172 (valine 172) interacts with Ca(2+). Residue 188–196 participates in a 1,2-diacyl-sn-glycero-3-phospho-(1D-myo-inositol-4,5-bisphosphate) binding; it reads RLFQVKGRR. One copy of the Gelsolin-like 2 repeat lies at 198–270; it reads VRATEVPVSW…SEEGTEPEAM (73 aa). Ca(2+) is bound by residues glycine 213 and aspartate 214. Cysteine 215 and cysteine 228 are disulfide-bonded. Glutamate 236 is a Ca(2+) binding site. The span at 247–262 shows a compositional bias: basic and acidic residues; the sequence is IRDNERSGRARVHVSE. The tract at residues 247–285 is disordered; sequence IRDNERSGRARVHVSEEGTEPEAMLQVLGPKPALPAGTE. Residues aspartate 286, glutamate 329, aspartate 330, and glutamate 354 each contribute to the Ca(2+) site. One copy of the Gelsolin-like 3 repeat lies at 317-389; the sequence is DENPFAQGAL…LPEGGETPLF (73 aa). Tyrosine 409 carries the phosphotyrosine; by SRC; in vitro modification. Residues 434 to 782 are actin-binding, Ca-sensitive; that stretch reads AAQHGMDDDG…LDRAMAELAA (349 aa). The Gelsolin-like 4 repeat unit spans residues 455–536; the sequence is SNKVPVDPAT…VQGKEPAHLM (82 aa). Phosphotyrosine; by SRC is present on tyrosine 465. Positions 471, 472, 502, 514, 519, 521, and 551 each coordinate Ca(2+). The Gelsolin-like 5 repeat unit spans residues 576 to 642; that stretch reads TRAVEVLPKA…AEGSEPDGFW (67 aa). Residue lysine 584 is modified to N6-acetyllysine. Ca(2+)-binding residues include asparagine 591 and aspartate 592. Tyrosine 603 bears the Phosphotyrosine; by SRC; in vitro mark. Glutamate 614 serves as a coordination point for Ca(2+). Tyrosine 651 carries the phosphotyrosine; by SRC; in vitro modification. Residues 681 to 756 form a Gelsolin-like 6 repeat; that stretch reads IEEVPGELMQ…VKQGFEPPSF (76 aa). Aspartate 696, aspartate 697, and glutamate 719 together coordinate Ca(2+). At threonine 742 the chain carries Phosphothreonine.

The protein belongs to the villin/gelsolin family. As to quaternary structure, binds to actin and to fibronectin. Identified in a complex composed of ACTA1, COBL, GSN and TMSB4X. Interacts with the inactive form of EIF2AK2/PKR. Interacts with FLII. In terms of processing, phosphorylation on Tyr-86, Tyr-409, Tyr-465, Tyr-603 and Tyr-651 in vitro is induced in presence of phospholipids. As to expression, phagocytic cells, platelets, fibroblasts, nonmuscle cells, smooth and skeletal muscle cells.

The protein localises to the cytoplasm. The protein resides in the cytoskeleton. It is found in the secreted. In terms of biological role, calcium-regulated, actin-modulating protein that binds to the plus (or barbed) ends of actin monomers or filaments, preventing monomer exchange (end-blocking or capping). It can promote the assembly of monomers into filaments (nucleation) as well as sever filaments already formed. Plays a role in ciliogenesis. This Homo sapiens (Human) protein is Gelsolin (GSN).